We begin with the raw amino-acid sequence, 197 residues long: Ion-translocating oxidoreductase complex subunit B (197 aa).

The segment at 1–26 (MSIVIIAVLALSALALTFGAVLGFAS) is hydrophobic. The 4Fe-4S domain maps to 32–90 (EGNPIVDQIDGLLPQTQCGQCGYPGCRPYAEAIANGDAINKCPPGGEATITALADLLDV). 12 residues coordinate [4Fe-4S] cluster: cysteine 49, cysteine 52, cysteine 57, cysteine 73, cysteine 115, cysteine 118, cysteine 121, cysteine 125, cysteine 145, cysteine 148, cysteine 151, and cysteine 155. 2 4Fe-4S ferredoxin-type domains span residues 106 to 135 (QVAY…GAAK) and 136 to 165 (QMHT…MIPA).

It belongs to the 4Fe4S bacterial-type ferredoxin family. RnfB subfamily. The complex is composed of six subunits: RnfA, RnfB, RnfC, RnfD, RnfE and RnfG. Requires [4Fe-4S] cluster as cofactor.

It is found in the cell inner membrane. Its function is as follows. Part of a membrane-bound complex that couples electron transfer with translocation of ions across the membrane. The protein is Ion-translocating oxidoreductase complex subunit B of Hahella chejuensis (strain KCTC 2396).